The sequence spans 145 residues: D-aminoacyl-tRNA deacylase (145 aa).

Residues 137-138 carry the Gly-cisPro motif, important for rejection of L-amino acids motif; the sequence is GP.

Belongs to the DTD family. As to quaternary structure, homodimer.

It localises to the cytoplasm. The enzyme catalyses glycyl-tRNA(Ala) + H2O = tRNA(Ala) + glycine + H(+). The catalysed reaction is a D-aminoacyl-tRNA + H2O = a tRNA + a D-alpha-amino acid + H(+). Its function is as follows. An aminoacyl-tRNA editing enzyme that deacylates mischarged D-aminoacyl-tRNAs. Also deacylates mischarged glycyl-tRNA(Ala), protecting cells against glycine mischarging by AlaRS. Acts via tRNA-based rather than protein-based catalysis; rejects L-amino acids rather than detecting D-amino acids in the active site. By recycling D-aminoacyl-tRNA to D-amino acids and free tRNA molecules, this enzyme counteracts the toxicity associated with the formation of D-aminoacyl-tRNA entities in vivo and helps enforce protein L-homochirality. In Chromohalobacter salexigens (strain ATCC BAA-138 / DSM 3043 / CIP 106854 / NCIMB 13768 / 1H11), this protein is D-aminoacyl-tRNA deacylase.